The sequence spans 269 residues: tRNA pseudouridine synthase A (269 aa).

Aspartate 51 acts as the Nucleophile in catalysis. Tyrosine 109 provides a ligand contact to substrate.

Belongs to the tRNA pseudouridine synthase TruA family. In terms of assembly, homodimer.

It carries out the reaction uridine(38/39/40) in tRNA = pseudouridine(38/39/40) in tRNA. Functionally, formation of pseudouridine at positions 38, 39 and 40 in the anticodon stem and loop of transfer RNAs. This chain is tRNA pseudouridine synthase A, found in Haemophilus influenzae (strain PittGG).